Reading from the N-terminus, the 642-residue chain is Uromodulin (642 aa).

Positions 1–24 (MGIPLTWMLLVMMVTSWFTLAEAS) are cleaved as a signal peptide. N-linked (GlcNAc...) asparagine glycans are attached at residues Asn-25 and Asn-38. An EGF-like 1 domain is found at 28–64 (EARRCSECHNNATCTVDGVVTTCSCQTGFTGDGLVCE). Intrachain disulfides connect Cys-32–Cys-41, Cys-35–Cys-50, Cys-52–Cys-63, Cys-69–Cys-82, Cys-77–Cys-91, Cys-93–Cys-105, Cys-111–Cys-125, Cys-119–Cys-134, Cys-136–Cys-147, Cys-149–Cys-160, Cys-154–Cys-171, Cys-175–Cys-268, Cys-196–Cys-283, Cys-218–Cys-256, Cys-224–Cys-288, Cys-249–Cys-257, Cys-298–Cys-307, Cys-301–Cys-316, Cys-318–Cys-348, Cys-336–Cys-426, and Cys-367–Cys-390. In terms of domain architecture, EGF-like 2; calcium-binding spans 65–106 (DMDECATPWTHNCSNSSCVNTPGSFKCSCQDGFRLTPELSCT). 2 N-linked (GlcNAc...) asparagine glycosylation sites follow: Asn-76 and Asn-79. One can recognise an EGF-like 3; calcium-binding domain in the interval 107-148 (DVDECSEQGLSNCHALATCVNTEGDYLCVCPEGFTGDGWYCE). The tract at residues 149–172 (CSPGSCEPGLDCLPQGPDGKLVCQ) is beta hairpin. A D10C region spans residues 173 to 292 (DPCNTYETLT…CNLAYCTDPS (120 aa)). Residue Asn-233 is glycosylated (N-linked (GlcNAc...) asparagine). The N-linked (GlcNAc...) asparagine glycan is linked to Asn-276. The EGF-like 4 domain maps to 293 to 324 (SVEGTCEECRVDEDCISDNGRWRCQCKQDSNI). Asn-323 carries N-linked (GlcNAc...) asparagine glycosylation. Residues 335–430 (ECGANDIKMS…RMNFECSYPL (96 aa)) are ZP-N. One can recognise a ZP domain in the interval 335–590 (ECGANDIKMS…PTCSGTRFRS (256 aa)). Residues Asn-397 and Asn-448 are each glycosylated (N-linked (GlcNAc...) asparagine). The interval 431-454 (DMKVSLKTSLQPMVSALNISLGGT) is flexible ZP-N/ZP-C linker; important for secretion and polymerization into filaments. Residues 455–465 (GKFTVRMALFQ) are internal hydrophobic patch (IHP). The ZP-C stretch occupies residues 455–590 (GKFTVRMALF…PTCSGTRFRS (136 aa)). 3 disulfide bridges follow: Cys-507/Cys-567, Cys-528/Cys-583, and Cys-572/Cys-579. N-linked (GlcNAc...) asparagine glycosylation occurs at Asn-514. Positions 587-590 (RFRS) are essential for cleavage by HPN. The external hydrophobic patch (EHP); regulates polymerization into filaments stretch occupies residues 599–607 (VLNLGPITR). The GPI-anchor amidated alanine moiety is linked to residue Ala-618. The propeptide at 619 to 642 (SSNLRLLSIWLLLFPSATLIFMVQ) is removed in mature form.

Homodimer that then polymerizes into long filaments. The filaments can additionally assemble laterally to form a sheet. The filaments consist of a zigzag-shaped backbone with laterally protruding arms which interact with bacterial adhesin fimH. Two fimH molecules can bind to a single UMOD monomer. N-glycosylated. Post-translationally, proteolytically cleaved at a conserved C-terminal proteolytic cleavage site to generate the secreted form found in urine. This cleavage is catalyzed by HPN. As to expression, detected in urine (secreted form). Detected in kidney thick ascending limb epithelial cells (at protein level).

It localises to the secreted. The protein localises to the apical cell membrane. Its subcellular location is the basolateral cell membrane. The protein resides in the cell projection. It is found in the cilium membrane. Its function is as follows. Functions in biogenesis and organization of the apical membrane of epithelial cells of the thick ascending limb of Henle's loop (TALH), where it promotes formation of complex filamentous gel-like structure that may play a role in the water barrier permeability. May serve as a receptor for binding and endocytosis of cytokines (IL-1, IL-2) and TNF. Facilitates neutrophil migration across renal epithelia. Functionally, in the urine, may contribute to colloid osmotic pressure, retards passage of positively charged electrolytes and inhibits formation of liquid containing supersaturated salts and subsequent formation of salt crystals. Protects against urinary tract infections by binding to type 1 fimbriated E.coli. Binds to the bacterial adhesin fimH which mediates the stable formation of bacterial aggregates, prevents the binding of E.coli to uroplakins UPK1A and UPK1B which act as urothelial receptors for type I fimbriae, and allows for pathogen clearance through micturation. Also promotes aggregation of other bacteria including K.pneumoniae, P.aeruginosa and S.mitis and so may also protect against other uropathogens. The chain is Uromodulin (Umod) from Mus musculus (Mouse).